The chain runs to 110 residues: MDPGSTASPLQCTAGFPSKNRVAILAELDKEKRKLLLQNQSSTNNPGASIALARPNMNKDFRDHSEQQHIAAQQKAALQHAHAHSSGYFITQDSAFGNLILPVIPRLEAE.

It belongs to the SOSS-C family. Belongs to the multiprotein complex Integrator. Component of the SOSS complex, composed of soss-b (soss-b1/nabp2 or soss-b2/nabp1), soss-a/ints3 and soss-c/inip.

The protein localises to the nucleus. Component of the SOSS complex, a multiprotein complex that functions downstream of the MRN complex to promote DNA repair and G2/M checkpoint. The SOSS complex associates with single-stranded DNA at DNA lesions and influences diverse endpoints in the cellular DNA damage response including cell-cycle checkpoint activation, recombinational repair and maintenance of genomic stability. Required for efficient homologous recombination-dependent repair of double-strand breaks (DSBs). This chain is SOSS complex subunit C (inip), found in Xenopus laevis (African clawed frog).